Here is a 361-residue protein sequence, read N- to C-terminus: Histidinol-phosphate aminotransferase (361 aa).

Residue Lys-219 is modified to N6-(pyridoxal phosphate)lysine.

Belongs to the class-II pyridoxal-phosphate-dependent aminotransferase family. Histidinol-phosphate aminotransferase subfamily. Homodimer. Requires pyridoxal 5'-phosphate as cofactor.

The catalysed reaction is L-histidinol phosphate + 2-oxoglutarate = 3-(imidazol-4-yl)-2-oxopropyl phosphate + L-glutamate. It functions in the pathway amino-acid biosynthesis; L-histidine biosynthesis; L-histidine from 5-phospho-alpha-D-ribose 1-diphosphate: step 7/9. The sequence is that of Histidinol-phosphate aminotransferase from Acinetobacter baumannii (strain ATCC 17978 / DSM 105126 / CIP 53.77 / LMG 1025 / NCDC KC755 / 5377).